We begin with the raw amino-acid sequence, 285 residues long: Polyamine aminopropyltransferase (285 aa).

Residues 2 to 237 (QMWFSQYHTV…GYWLFGFASK (236 aa)) enclose the PABS domain. Residue Gln31 participates in S-methyl-5'-thioadenosine binding. A spermidine-binding site is contributed by Asp86. S-methyl-5'-thioadenosine is bound by residues Glu106 and 137-138 (DG). The active-site Proton acceptor is the Asp155. Position 155–158 (155–158 (DSTD)) interacts with spermidine.

Belongs to the spermidine/spermine synthase family. Homodimer or homotetramer.

It is found in the cytoplasm. It carries out the reaction S-adenosyl 3-(methylsulfanyl)propylamine + putrescine = S-methyl-5'-thioadenosine + spermidine + H(+). It participates in amine and polyamine biosynthesis; spermidine biosynthesis; spermidine from putrescine: step 1/1. In terms of biological role, catalyzes the irreversible transfer of a propylamine group from the amino donor S-adenosylmethioninamine (decarboxy-AdoMet) to putrescine (1,4-diaminobutane) to yield spermidine. The protein is Polyamine aminopropyltransferase of Agathobacter rectalis (strain ATCC 33656 / DSM 3377 / JCM 17463 / KCTC 5835 / VPI 0990) (Eubacterium rectale).